The chain runs to 200 residues: Serine/arginine-rich splicing factor RSZ23 (200 aa).

In terms of domain architecture, RRM spans 2 to 71 (ARVYVGNLDP…NGWRVELSTK (70 aa)). The segment at 86–103 (MKCYECGEPGHFARECRL) adopts a CCHC-type zinc-finger fold. The segment at 105–200 (IGSGGLGSGR…REESPYANNA (96 aa)) is disordered. Residues 113 to 139 (GRRRSRSRSRSPRYRGRSRSRSPRYRR) are compositionally biased toward basic residues.

It belongs to the splicing factor SR family. Extensively phosphorylated on serine residues in the RS domain. As to expression, expressed in roots, leaves and immature seeds.

Its subcellular location is the nucleus. Its function is as follows. Involved in pre-mRNA splicing. In protoplast assay, enhances splicing efficiency of WAXY intron 1 and alters the selection of the 5'-splice sites by stimulating site 1 (proximal site). This chain is Serine/arginine-rich splicing factor RSZ23 (RSZ23), found in Oryza sativa subsp. japonica (Rice).